Consider the following 121-residue polypeptide: uncharacterized protein (121 aa).

Residues 6-26 (ITTASILLVVIVAFCAAAPMI) form a helical membrane-spanning segment.

The protein localises to the membrane. This is an uncharacterized protein from Caenorhabditis elegans.